Reading from the N-terminus, the 741-residue chain is Phosphoribosylformylglycinamidine synthase subunit PurL (741 aa).

His-54 is a catalytic residue. Residues Tyr-57 and Lys-96 each coordinate ATP. Residue Glu-98 participates in Mg(2+) binding. Substrate is bound by residues 99–102 (SHNH) and Arg-121. The active-site Proton acceptor is His-100. Asp-122 provides a ligand contact to Mg(2+). Gln-245 is a substrate binding site. Asp-273 serves as a coordination point for Mg(2+). 317 to 319 (ESQ) contributes to the substrate binding site. 2 residues coordinate ATP: Asp-500 and Gly-537. Asn-538 contributes to the Mg(2+) binding site. Ser-540 lines the substrate pocket.

The protein belongs to the FGAMS family. As to quaternary structure, monomer. Part of the FGAM synthase complex composed of 1 PurL, 1 PurQ and 2 PurS subunits.

Its subcellular location is the cytoplasm. The catalysed reaction is N(2)-formyl-N(1)-(5-phospho-beta-D-ribosyl)glycinamide + L-glutamine + ATP + H2O = 2-formamido-N(1)-(5-O-phospho-beta-D-ribosyl)acetamidine + L-glutamate + ADP + phosphate + H(+). Its pathway is purine metabolism; IMP biosynthesis via de novo pathway; 5-amino-1-(5-phospho-D-ribosyl)imidazole from N(2)-formyl-N(1)-(5-phospho-D-ribosyl)glycinamide: step 1/2. In terms of biological role, part of the phosphoribosylformylglycinamidine synthase complex involved in the purines biosynthetic pathway. Catalyzes the ATP-dependent conversion of formylglycinamide ribonucleotide (FGAR) and glutamine to yield formylglycinamidine ribonucleotide (FGAM) and glutamate. The FGAM synthase complex is composed of three subunits. PurQ produces an ammonia molecule by converting glutamine to glutamate. PurL transfers the ammonia molecule to FGAR to form FGAM in an ATP-dependent manner. PurS interacts with PurQ and PurL and is thought to assist in the transfer of the ammonia molecule from PurQ to PurL. The protein is Phosphoribosylformylglycinamidine synthase subunit PurL of Shouchella clausii (strain KSM-K16) (Alkalihalobacillus clausii).